Consider the following 322-residue polypeptide: Homoserine kinase (322 aa).

107 to 117 contacts ATP; it reads PLSSGMGGSAA.

The protein belongs to the GHMP kinase family. Homoserine kinase subfamily.

It is found in the cytoplasm. The catalysed reaction is L-homoserine + ATP = O-phospho-L-homoserine + ADP + H(+). It functions in the pathway amino-acid biosynthesis; L-threonine biosynthesis; L-threonine from L-aspartate: step 4/5. Functionally, catalyzes the ATP-dependent phosphorylation of L-homoserine to L-homoserine phosphate. This Xylella fastidiosa (strain 9a5c) protein is Homoserine kinase.